Reading from the N-terminus, the 410-residue chain is Testis-specific Y-encoded-like protein 6 (410 aa).

Disordered regions lie at residues 1 to 31 and 46 to 69; these read MSLP…EKSK and PIVF…DGGH. Position 9 is a phosphoserine (serine 9). Basic and acidic residues predominate over residues 18 to 31; it reads EDPHQGQRSREKSK.

Belongs to the nucleosome assembly protein (NAP) family.

This Homo sapiens (Human) protein is Testis-specific Y-encoded-like protein 6 (TSPYL6).